Here is a 353-residue protein sequence, read N- to C-terminus: Methionine import ATP-binding protein MetN (353 aa).

An ABC transporter domain is found at 8-249; the sequence is LDQIDVTFHQ…PKQPLTQDFI (242 aa). ATP is bound at residue 42 to 49; it reads GYSGAGKS.

Belongs to the ABC transporter superfamily. Methionine importer (TC 3.A.1.24) family. As to quaternary structure, the complex is composed of two ATP-binding proteins (MetN), two transmembrane proteins (MetI) and a solute-binding protein (MetQ).

Its subcellular location is the cell membrane. It carries out the reaction L-methionine(out) + ATP + H2O = L-methionine(in) + ADP + phosphate + H(+). The enzyme catalyses D-methionine(out) + ATP + H2O = D-methionine(in) + ADP + phosphate + H(+). Its function is as follows. Part of the ABC transporter complex MetNIQ involved in methionine import. Responsible for energy coupling to the transport system. The polypeptide is Methionine import ATP-binding protein MetN (Streptococcus pneumoniae (strain ATCC BAA-255 / R6)).